Reading from the N-terminus, the 642-residue chain is Chaperone protein DnaK (642 aa).

At Thr198 the chain carries Phosphothreonine; by autocatalysis. Residues 602 to 642 (AYAKMTEKQQSDDGAGTQNADHKEDDVVDADFEEVKSDKKD) form a disordered region.

This sequence belongs to the heat shock protein 70 family.

Acts as a chaperone. In Dichelobacter nodosus (strain VCS1703A), this protein is Chaperone protein DnaK.